A 598-amino-acid chain; its full sequence is (-)-endo-fenchol synthase, chloroplastic (598 aa).

The transit peptide at 1-34 (MWSTISISMNVAILKKPLNFLHNSNNKASNPRCV) directs the protein to the chloroplast. The Mg(2+) site is built by Asp351, Asp355, Asp495, Thr499, and Glu503. Residues 351–355 (DDVYD) carry the DDXXD motif motif.

Belongs to the terpene synthase family. Mg(2+) serves as cofactor. Mn(2+) is required as a cofactor.

The protein resides in the plastid. It is found in the chloroplast. It catalyses the reaction (2E)-geranyl diphosphate + H2O = (1S,2S,4R)-endo-fenchol + diphosphate. The protein operates within secondary metabolite biosynthesis; terpenoid biosynthesis. Its function is as follows. Monoterpene synthase that catalyzes the formation of fenchol from geranyl diphosphate. This chain is (-)-endo-fenchol synthase, chloroplastic (FES), found in Ocimum basilicum (Sweet basil).